Reading from the N-terminus, the 471-residue chain is Probable nucleoredoxin 3 (471 aa).

2 consecutive Thioredoxin domains span residues 15 to 173 (VSIP…ARRQ) and 179 to 334 (QLLG…KERD).

Belongs to the nucleoredoxin family.

The catalysed reaction is [protein]-dithiol + NAD(+) = [protein]-disulfide + NADH + H(+). It catalyses the reaction [protein]-dithiol + NADP(+) = [protein]-disulfide + NADPH + H(+). Its function is as follows. Probable thiol-disulfide oxidoreductase that may participate in various redox reactions. This chain is Probable nucleoredoxin 3, found in Oryza sativa subsp. japonica (Rice).